Here is a 335-residue protein sequence, read N- to C-terminus: Glyceraldehyde-3-phosphate dehydrogenase (335 aa).

Residues 10-11 (RI), D33, R77, and S119 each bind NAD(+). Residues 150–152 (SCT), T181, 210–211 (TG), and R233 contribute to the D-glyceraldehyde 3-phosphate site. C151 serves as the catalytic Nucleophile. N315 serves as a coordination point for NAD(+).

The protein belongs to the glyceraldehyde-3-phosphate dehydrogenase family. Homotetramer.

The protein resides in the cytoplasm. It carries out the reaction D-glyceraldehyde 3-phosphate + phosphate + NAD(+) = (2R)-3-phospho-glyceroyl phosphate + NADH + H(+). Its pathway is carbohydrate degradation; glycolysis; pyruvate from D-glyceraldehyde 3-phosphate: step 1/5. Functionally, catalyzes the oxidative phosphorylation of glyceraldehyde 3-phosphate (G3P) to 1,3-bisphosphoglycerate (BPG) using the cofactor NAD. The first reaction step involves the formation of a hemiacetal intermediate between G3P and a cysteine residue, and this hemiacetal intermediate is then oxidized to a thioester, with concomitant reduction of NAD to NADH. The reduced NADH is then exchanged with the second NAD, and the thioester is attacked by a nucleophilic inorganic phosphate to produce BPG. The chain is Glyceraldehyde-3-phosphate dehydrogenase (gap) from Chlamydia pneumoniae (Chlamydophila pneumoniae).